The chain runs to 389 residues: PqqA peptide cyclase (389 aa).

One can recognise a Radical SAM core domain in the interval Val-20–Ala-235. Residues Cys-34, Cys-38, and Cys-41 each coordinate [4Fe-4S] cluster.

Belongs to the radical SAM superfamily. PqqE family. In terms of assembly, interacts with PqqD. The interaction is necessary for activity of PqqE. [4Fe-4S] cluster serves as cofactor.

The enzyme catalyses [PQQ precursor protein] + S-adenosyl-L-methionine = E-Y cross-linked-[PQQ precursor protein] + 5'-deoxyadenosine + L-methionine + H(+). Its pathway is cofactor biosynthesis; pyrroloquinoline quinone biosynthesis. In terms of biological role, catalyzes the cross-linking of a glutamate residue and a tyrosine residue in the PqqA protein as part of the biosynthesis of pyrroloquinoline quinone (PQQ). This chain is PqqA peptide cyclase, found in Pseudomonas fluorescens (strain ATCC BAA-477 / NRRL B-23932 / Pf-5).